We begin with the raw amino-acid sequence, 343 residues long: Cyclin-Y-like protein 1-B (343 aa).

Residues methionine 1–alanine 69 are disordered. Basic and acidic residues predominate over residues alanine 17–glutamate 28. Residues aspartate 145–asparagine 267 form the Cyclin N-terminal domain.

The protein belongs to the cyclin family. Cyclin Y subfamily.

The polypeptide is Cyclin-Y-like protein 1-B (ccnyl1-b) (Xenopus laevis (African clawed frog)).